The sequence spans 474 residues: tRNA-2-methylthio-N(6)-dimethylallyladenosine synthase (474 aa).

One can recognise an MTTase N-terminal domain in the interval 3–120 (KKLHIKTWGC…LPEMINHVQE (118 aa)). The [4Fe-4S] cluster site is built by Cys12, Cys49, Cys83, Cys157, Cys161, and Cys164. Positions 143-375 (RAEGPTAFVS…QQRISQQAME (233 aa)) constitute a Radical SAM core domain. Positions 378–441 (RKMVGTVQRV…ASSLRGILLR (64 aa)) constitute a TRAM domain.

This sequence belongs to the methylthiotransferase family. MiaB subfamily. As to quaternary structure, monomer. It depends on [4Fe-4S] cluster as a cofactor.

Its subcellular location is the cytoplasm. It carries out the reaction N(6)-dimethylallyladenosine(37) in tRNA + (sulfur carrier)-SH + AH2 + 2 S-adenosyl-L-methionine = 2-methylsulfanyl-N(6)-dimethylallyladenosine(37) in tRNA + (sulfur carrier)-H + 5'-deoxyadenosine + L-methionine + A + S-adenosyl-L-homocysteine + 2 H(+). Functionally, catalyzes the methylthiolation of N6-(dimethylallyl)adenosine (i(6)A), leading to the formation of 2-methylthio-N6-(dimethylallyl)adenosine (ms(2)i(6)A) at position 37 in tRNAs that read codons beginning with uridine. The chain is tRNA-2-methylthio-N(6)-dimethylallyladenosine synthase from Yersinia pseudotuberculosis serotype O:3 (strain YPIII).